The following is a 202-amino-acid chain: Small ribosomal subunit protein uS4 (202 aa).

The segment at 22 to 48 (TGKELARRPYAPGDHGQGRRGKLSEYG) is disordered. The S4 RNA-binding domain maps to 93-154 (RRLDNMVYRL…KSKKLAVITG (62 aa)).

The protein belongs to the universal ribosomal protein uS4 family. In terms of assembly, part of the 30S ribosomal subunit. Contacts protein S5. The interaction surface between S4 and S5 is involved in control of translational fidelity.

One of the primary rRNA binding proteins, it binds directly to 16S rRNA where it nucleates assembly of the body of the 30S subunit. Its function is as follows. With S5 and S12 plays an important role in translational accuracy. The protein is Small ribosomal subunit protein uS4 of Lactiplantibacillus plantarum (strain ATCC BAA-793 / NCIMB 8826 / WCFS1) (Lactobacillus plantarum).